Reading from the N-terminus, the 191-residue chain is Protein hugin (191 aa).

The signal sequence occupies residues 1–24 (MCGPSYCTLLLIAASCYILVCSHA). Residues 25-119 (KSLQGTSKLD…LTYYLLLQKL (95 aa)) constitute a propeptide that is removed on maturation. 2 positions are modified to leucine amide: L137 and L181. Positions 185–191 (AQVCGGD) are excised as a propeptide.

This sequence belongs to the pyrokinin family. Expressed in a subgroup of neurosecretory cells in the subesophageal ganglion from embryonic stage 9 to larval stages.

It localises to the secreted. Probably has a role in larval molting. The chain is Protein hugin (Hug) from Drosophila melanogaster (Fruit fly).